A 326-amino-acid polypeptide reads, in one-letter code: Dipeptide transport ATP-binding protein DppD (326 aa).

Positions 5–255 constitute an ABC transporter domain; that stretch reads IRVEDLRAVY…PLHPYTRGLI (251 aa). ATP-binding positions include 44 to 49, Asn61, and Gln97; that span reads ASGKST. Cys285, Cys291, Cys298, and Cys316 together coordinate [4Fe-4S] cluster.

The protein belongs to the ABC transporter superfamily.

It is found in the cell membrane. The enzyme catalyses a dipeptide(out) + ATP + H2O = a dipeptide(in) + ADP + phosphate + H(+). With respect to regulation, the C-terminal iron-sulfur cluster may stabilize the structure of the C-terminal loops and may function in the regulation of the transport process. Functionally, part of the ABC transporter Dpp involved in dipeptide transport. Responsible for energy coupling to the transport system. This chain is Dipeptide transport ATP-binding protein DppD, found in Caldanaerobacter subterraneus subsp. tengcongensis (strain DSM 15242 / JCM 11007 / NBRC 100824 / MB4) (Thermoanaerobacter tengcongensis).